Here is a 362-residue protein sequence, read N- to C-terminus: Histidinol-phosphate aminotransferase 1 (362 aa).

Lysine 226 is subject to N6-(pyridoxal phosphate)lysine.

The protein belongs to the class-II pyridoxal-phosphate-dependent aminotransferase family. Histidinol-phosphate aminotransferase subfamily. Homodimer. The cofactor is pyridoxal 5'-phosphate.

The enzyme catalyses L-histidinol phosphate + 2-oxoglutarate = 3-(imidazol-4-yl)-2-oxopropyl phosphate + L-glutamate. Its pathway is amino-acid biosynthesis; L-histidine biosynthesis; L-histidine from 5-phospho-alpha-D-ribose 1-diphosphate: step 7/9. This chain is Histidinol-phosphate aminotransferase 1, found in Dechloromonas aromatica (strain RCB).